Consider the following 145-residue polypeptide: 3-hydroxyacyl-[acyl-carrier-protein] dehydratase FabZ (145 aa).

His-52 is an active-site residue.

This sequence belongs to the thioester dehydratase family. FabZ subfamily.

The protein resides in the cytoplasm. The enzyme catalyses a (3R)-hydroxyacyl-[ACP] = a (2E)-enoyl-[ACP] + H2O. Its function is as follows. Involved in unsaturated fatty acids biosynthesis. Catalyzes the dehydration of short chain beta-hydroxyacyl-ACPs and long chain saturated and unsaturated beta-hydroxyacyl-ACPs. The polypeptide is 3-hydroxyacyl-[acyl-carrier-protein] dehydratase FabZ (Deinococcus radiodurans (strain ATCC 13939 / DSM 20539 / JCM 16871 / CCUG 27074 / LMG 4051 / NBRC 15346 / NCIMB 9279 / VKM B-1422 / R1)).